Here is a 440-residue protein sequence, read N- to C-terminus: Serine protease inhibitor A3G (440 aa).

Residues 357–382 (GTEAAAATGMAGVGCCAVFDFLEIFF) form an RCL region.

This sequence belongs to the serpin family. Expressed in bone marrow (particularly hematopoietic stem cells), heart, kidney, liver, lung, skeletal muscle, spleen, testis, thymus and T-cells.

The protein resides in the cytoplasm. The protein localises to the nucleus. In terms of biological role, serine and cysteine protease inhibitor. Can inhibit lysosomal papain-like proteases including the cathepsins B, G, H, K, L and V. Ineffective against elastase, granzyme A, granzyme B, or caspases 3, 8 or 9. Inhibition of cytoplasmic cathepsin B following release from the lysosome may protect cells from apoptosis. This may facilitate the survival of progenitor T-cells and the subsequent development of long term memory CD8 T-cells. In Mus musculus (Mouse), this protein is Serine protease inhibitor A3G (Serpina3g).